Reading from the N-terminus, the 445-residue chain is Guanosine nucleotide diphosphate dissociation inhibitor 1 (445 aa).

This sequence belongs to the Rab GDI family. As to quaternary structure, interacts with the GDP-bound form of RABA5C (via C-terminus). Expressed in roots, rosette leaves, stems, floral buds and siliques.

Functionally, regulates the GDP/GTP exchange reaction of most RAB proteins by inhibiting the dissociation of GDP from them, and the subsequent binding of GTP. This is Guanosine nucleotide diphosphate dissociation inhibitor 1 (GDI1) from Arabidopsis thaliana (Mouse-ear cress).